The chain runs to 126 residues: Large ribosomal subunit protein bL17 (126 aa).

This sequence belongs to the bacterial ribosomal protein bL17 family. Part of the 50S ribosomal subunit. Contacts protein L32.

In Coxiella burnetii (strain CbuK_Q154) (Coxiella burnetii (strain Q154)), this protein is Large ribosomal subunit protein bL17.